A 200-amino-acid chain; its full sequence is ATP-dependent Clp protease proteolytic subunit 2 (200 aa).

The active-site Nucleophile is S100.

The protein belongs to the peptidase S14 family. In terms of assembly, fourteen ClpP subunits assemble into 2 heptameric rings which stack back to back to give a disk-like structure with a central cavity, resembling the structure of eukaryotic proteasomes.

The protein localises to the cytoplasm. It carries out the reaction Hydrolysis of proteins to small peptides in the presence of ATP and magnesium. alpha-casein is the usual test substrate. In the absence of ATP, only oligopeptides shorter than five residues are hydrolyzed (such as succinyl-Leu-Tyr-|-NHMec, and Leu-Tyr-Leu-|-Tyr-Trp, in which cleavage of the -Tyr-|-Leu- and -Tyr-|-Trp bonds also occurs).. In terms of biological role, cleaves peptides in various proteins in a process that requires ATP hydrolysis. Has a chymotrypsin-like activity. Plays a major role in the degradation of misfolded proteins. The polypeptide is ATP-dependent Clp protease proteolytic subunit 2 (Streptomyces avermitilis (strain ATCC 31267 / DSM 46492 / JCM 5070 / NBRC 14893 / NCIMB 12804 / NRRL 8165 / MA-4680)).